We begin with the raw amino-acid sequence, 374 residues long: Alcohol dehydrogenase S chain (374 aa).

N-acetylserine is present on S2. The Zn(2+) site is built by C47, H68, C98, C101, C104, C112, and C174. NAD(+) contacts are provided by residues 199–204, D223, K228, 292–294, and R369; these read GLGGVG and VGV.

The protein belongs to the zinc-containing alcohol dehydrogenase family. Class-I subfamily. As to quaternary structure, dimer of identical or non-identical chains of two types (E and S) coded by 2 separate genes at different loci. Requires Zn(2+) as cofactor.

The protein localises to the cytoplasm. The catalysed reaction is a primary alcohol + NAD(+) = an aldehyde + NADH + H(+). The enzyme catalyses a secondary alcohol + NAD(+) = a ketone + NADH + H(+). This Equus caballus (Horse) protein is Alcohol dehydrogenase S chain.